The chain runs to 263 residues: Killer cell lectin-like receptor 4 (263 aa).

At 1–44 the chain is on the cytoplasmic side; the sequence is MTEQEDTFSAVRFHKSSGLQNEMRLKETRKPEKARLRVCSVPWQ. The chain crosses the membrane as a helical; Signal-anchor for type II membrane protein span at residues 45 to 65; that stretch reads LIVIALGILISLRLVTVAVLM. Topologically, residues 66-263 are extracellular; sequence TNIFQYGQQK…CGKRLDKFPH (198 aa). 2 N-linked (GlcNAc...) asparagine glycosylation sites follow: asparagine 87 and asparagine 104. The 120-residue stretch at 139-258 folds into the C-type lectin domain; it reads GVKVYWFCYG…SFICICGKRL (120 aa). 4 disulfides stabilise this stretch: cysteine 146–cysteine 151, cysteine 164–cysteine 252, cysteine 168–cysteine 254, and cysteine 233–cysteine 246. Asparagine 170 and asparagine 222 each carry an N-linked (GlcNAc...) asparagine glycan.

Homodimer; disulfide-linked. Interacts with the adapter protein TYROBP/DAP12; the interaction leads to natural killer cell activation.

The protein localises to the cell membrane. Functionally, receptor on natural killer (NK) cells for class I MHC. This Mus musculus (Mouse) protein is Killer cell lectin-like receptor 4 (Klra4).